The sequence spans 245 residues: uncharacterized protein (245 aa).

Residues 1 to 27 (MKLKKRVSMFLVALTMCGGLFVTPAKA) form the signal peptide.

This is an uncharacterized protein from Bacillus subtilis (strain 168).